A 368-amino-acid polypeptide reads, in one-letter code: Zinc finger protein 24 (368 aa).

Lys-22 participates in a covalent cross-link: Glycyl lysine isopeptide (Lys-Gly) (interchain with G-Cter in SUMO2). Lys-27 is covalently cross-linked (Glycyl lysine isopeptide (Lys-Gly) (interchain with G-Cter in SUMO1); alternate). A Glycyl lysine isopeptide (Lys-Gly) (interchain with G-Cter in SUMO2); alternate cross-link involves residue Lys-27. Positions 52 to 134 constitute an SCAN box domain; sequence RQRFRQFGYQ…TVLEDLESEL (83 aa). 2 positions are modified to phosphoserine: Ser-132 and Ser-142. Glycyl lysine isopeptide (Lys-Gly) (interchain with G-Cter in SUMO2) cross-links involve residues Lys-147, Lys-177, and Lys-236. Residues 251–273 form a C2H2-type 1 zinc finger; the sequence is HICDECGKHFSQGSALILHQRIH. The segment at 251–301 is necessary and sufficient for nuclear localization; the sequence is HICDECGKHFSQGSALILHQRIHSGEKPYGCVECGKAFSRSSILVQHQRVH. Position 274 is a phosphoserine (Ser-274). Residues Lys-277 and Lys-286 each participate in a glycyl lysine isopeptide (Lys-Gly) (interchain with G-Cter in SUMO2) cross-link. 3 consecutive C2H2-type zinc fingers follow at residues 279–301, 307–329, and 335–357; these read YGCVECGKAFSRSSILVQHQRVH, YKCLECGKAFSQNSGLINHQRIH, and YECVQCGKSYSQSSNLFRHQRRH. Phosphoserine is present on Ser-292. Phosphotyrosine is present on Tyr-335. Glycyl lysine isopeptide (Lys-Gly) (interchain with G-Cter in SUMO2) cross-links involve residues Lys-361 and Lys-367.

Belongs to the krueppel C2H2-type zinc-finger protein family. Sumoylated.

It is found in the nucleus. In terms of biological role, transcription factor required for myelination of differentiated oligodendrocytes. Required for the conversion of oligodendrocytes from the premyelinating to the myelinating state. In the developing central nervous system (CNS), involved in the maintenance in the progenitor stage by promoting the cell cycle. Specifically binds to the 5'-TCAT-3' DNA sequence. Has transcription repressor activity in vitro. The sequence is that of Zinc finger protein 24 (ZNF24) from Pongo abelii (Sumatran orangutan).